A 459-amino-acid polypeptide reads, in one-letter code: Putative metabolite transport protein YdjK (459 aa).

The Cytoplasmic portion of the chain corresponds to 1 to 25; it reads MEQITKPHCGARLDRLPDCRWHSSM. A helical membrane pass occupies residues 26–46; it reads FAIVAFGLLVCWSNAVGGLIL. The Periplasmic segment spans residues 47 to 60; sequence AQLKALGWTDNSTT. The helical transmembrane segment at 61-81 threads the bilayer; the sequence is ATFSAITTAGMFLGALVGGII. The Cytoplasmic segment spans residues 82–90; it reads GDKTGRRNA. The helical transmembrane segment at 91–111 threads the bilayer; that stretch reads FILYEAIHIASMVVGAFSPNM. Asp-112 is a topological domain (periplasmic). Residues 113–133 form a helical membrane-spanning segment; sequence FLIACRFVMGVGLGALLVTLF. Residues 134–153 lie on the Cytoplasmic side of the membrane; the sequence is AGFTEYMPGRNRGTWSSRVS. Residues 154–174 form a helical membrane-spanning segment; that stretch reads FIGNWSYPLCSLIAMGLTPLI. Residues 175–181 lie on the Periplasmic side of the membrane; sequence SAEWNWR. The helical transmembrane segment at 182–202 threads the bilayer; sequence VQLLIPAILSLIATALAWRYF. The Cytoplasmic segment spans residues 203-271; it reads PESPRWLESR…LLKRVILGSC (69 aa). Residues 272–292 form a helical membrane-spanning segment; the sequence is VLIAMNVVQYTLINWLPTIFM. At 293 to 301 the chain is on the periplasmic side; sequence TQGINLKDS. Residues 302-322 traverse the membrane as a helical segment; sequence IVLNTMSMFGAPFGIFIAMLV. At 323-329 the chain is on the cytoplasmic side; that stretch reads MDKIPRK. Residues 330–350 form a helical membrane-spanning segment; sequence TMGVGLLILIAVLGYIYSLQT. Residue Ser-351 is a topological domain, periplasmic. A helical membrane pass occupies residues 352 to 372; that stretch reads MLLITLIGFFLITFVYMYVCY. At 373–399 the chain is on the cytoplasmic side; sequence ASAVYVPEIWPTEAKLRGSGLANAVGR. Transmembrane regions (helical) follow at residues 400 to 420 and 421 to 441; these read ISGI…GVTG and VFIL…TIGI. The Cytoplasmic portion of the chain corresponds to 442–459; it reads ETKGVSVESLSIDAVANK.

The protein belongs to the major facilitator superfamily. Sugar transporter (TC 2.A.1.1) family.

Its subcellular location is the cell inner membrane. This chain is Putative metabolite transport protein YdjK (ydjK), found in Escherichia coli (strain K12).